The chain runs to 342 residues: Isopentenyl-diphosphate delta-isomerase (342 aa).

11 to 12 contacts substrate; it reads RK. Residues S68, 69–71, S99, and N127 each bind FMN; that span reads SMT. Residue 99-101 participates in substrate binding; that stretch reads SMR. E163 serves as a coordination point for Mg(2+). Residues K194, T224, and 295-296 each bind FMN; that span reads AG.

The protein belongs to the IPP isomerase type 2 family. As to quaternary structure, homooctamer. Dimer of tetramers. FMN serves as cofactor. Requires NADPH as cofactor. It depends on Mg(2+) as a cofactor.

The protein resides in the cytoplasm. It carries out the reaction isopentenyl diphosphate = dimethylallyl diphosphate. Functionally, involved in the biosynthesis of isoprenoids. Catalyzes the 1,3-allylic rearrangement of the homoallylic substrate isopentenyl (IPP) to its allylic isomer, dimethylallyl diphosphate (DMAPP). This Rickettsia prowazekii (strain Madrid E) protein is Isopentenyl-diphosphate delta-isomerase.